The primary structure comprises 720 residues: Glycine--tRNA ligase beta subunit (720 aa).

Belongs to the class-II aminoacyl-tRNA synthetase family. As to quaternary structure, tetramer of two alpha and two beta subunits.

The protein localises to the cytoplasm. The catalysed reaction is tRNA(Gly) + glycine + ATP = glycyl-tRNA(Gly) + AMP + diphosphate. The polypeptide is Glycine--tRNA ligase beta subunit (Acidovorax sp. (strain JS42)).